A 269-amino-acid polypeptide reads, in one-letter code: tRNA pseudouridine synthase A (269 aa).

Catalysis depends on Asp-51, which acts as the Nucleophile. Tyr-109 serves as a coordination point for substrate.

This sequence belongs to the tRNA pseudouridine synthase TruA family. As to quaternary structure, homodimer.

It catalyses the reaction uridine(38/39/40) in tRNA = pseudouridine(38/39/40) in tRNA. Formation of pseudouridine at positions 38, 39 and 40 in the anticodon stem and loop of transfer RNAs. The chain is tRNA pseudouridine synthase A from Aeromonas hydrophila subsp. hydrophila (strain ATCC 7966 / DSM 30187 / BCRC 13018 / CCUG 14551 / JCM 1027 / KCTC 2358 / NCIMB 9240 / NCTC 8049).